The chain runs to 331 residues: Glutamyl-tRNA reductase (331 aa).

Substrate-binding positions include T49–R52, S107, E112–Q114, and Q118. C50 serves as the catalytic Nucleophile. G184–G189 serves as a coordination point for NADP(+).

Belongs to the glutamyl-tRNA reductase family. Homodimer.

It catalyses the reaction (S)-4-amino-5-oxopentanoate + tRNA(Glu) + NADP(+) = L-glutamyl-tRNA(Glu) + NADPH + H(+). It functions in the pathway porphyrin-containing compound metabolism; protoporphyrin-IX biosynthesis; 5-aminolevulinate from L-glutamyl-tRNA(Glu): step 1/2. Its function is as follows. Catalyzes the NADPH-dependent reduction of glutamyl-tRNA(Glu) to glutamate 1-semialdehyde (GSA). In Acetivibrio thermocellus (strain ATCC 27405 / DSM 1237 / JCM 9322 / NBRC 103400 / NCIMB 10682 / NRRL B-4536 / VPI 7372) (Clostridium thermocellum), this protein is Glutamyl-tRNA reductase.